A 434-amino-acid chain; its full sequence is F-box only protein 15 (434 aa).

An F-box domain is found at 1–41 (MPSEILLKIFSYLDAVSLLCAGCVSRRFYHLANDNFIWIRI).

In terms of assembly, directly interacts with SKP1 and CUL1.

In terms of biological role, substrate-recognition component of the SCF (SKP1-CUL1-F-box protein)-type E3 ubiquitin ligase complex. This chain is F-box only protein 15 (FBXO15), found in Macaca fascicularis (Crab-eating macaque).